The following is a 292-amino-acid chain: Type II methyltransferase M.SmaI (292 aa).

Residues 110 to 130 (WRDKDDKNKGRAMSYRPPTPE) form a disordered region.

This sequence belongs to the N(4)/N(6)-methyltransferase family. N(4) subfamily.

The catalysed reaction is a 2'-deoxycytidine in DNA + S-adenosyl-L-methionine = an N(4)-methyl-2'-deoxycytidine in DNA + S-adenosyl-L-homocysteine + H(+). A beta subtype methylase thatnrecognizes the double-stranded sequence 5'-CCCGGG-3', methylates C-2 on both strands, and protects the DNA from cleavage by the SmaI endonuclease. The protein is Type II methyltransferase M.SmaI (smaIM) of Serratia marcescens.